We begin with the raw amino-acid sequence, 885 residues long: Exosome complex component 10 (885 aa).

Lysine 19 is covalently cross-linked (Glycyl lysine isopeptide (Lys-Gly) (interchain with G-Cter in SUMO2)). A 3'-5' exonuclease domain is found at 289 to 455 (HFISSLDELV…YIYDKMRLEM (167 aa)). 4 residues coordinate Mg(2+): aspartate 313, glutamate 315, aspartate 371, and aspartate 440. The region spanning 503–583 (NTQQLTAFQL…QQAREMPLLK (81 aa)) is the HRDC domain. Residue lysine 583 forms a Glycyl lysine isopeptide (Lys-Gly) (interchain with G-Cter in SUMO1); alternate linkage. Residue lysine 583 forms a Glycyl lysine isopeptide (Lys-Gly) (interchain with G-Cter in SUMO2); alternate linkage. Lysine 710 participates in a covalent cross-link: Glycyl lysine isopeptide (Lys-Gly) (interchain with G-Cter in SUMO2). Basic and acidic residues-rich tracts occupy residues 776–794 (AAKKRERATSDPRTTEQKQ) and 804–816 (KPKDPEPPEKEFT). Residues 776 to 885 (AAKKRERATS…RGFRYNWPQR (110 aa)) form a disordered region. A Phosphoserine modification is found at serine 821. Glycyl lysine isopeptide (Lys-Gly) (interchain with G-Cter in SUMO2) cross-links involve residues lysine 826, lysine 833, and lysine 859. A compositionally biased stretch (polar residues) spans 831–848 (NSKSKVSSQFDPNKQTPS). The span at 861–871 (SVGNKSMSFPT) shows a compositional bias: polar residues. Lysine 873 participates in a covalent cross-link: Glycyl lysine isopeptide (Lys-Gly) (interchain with G-Cter in SUMO2).

Belongs to the exosome component 10/RRP6 family. As to quaternary structure, component of the RNA exosome complex. The catalytically inactive RNA exosome core complex (Exo-9) associates with the catalytic subunit EXOSC10/RRP6 (via its N-terminus). Exo-9 may associate with DIS3 to form the nucleolar exosome complex, or DIS3L to form the cytoplasmic exosome complex. The RNA exosome complex interacts with cofactors C1D/RRP47, MPHOSPH6/MPP6 and MTREX/MTR4. Interacts with MTREX; the interaction with MTREX mediates the association of MTREX with nuclear RNA exosomes. Part of the small subunit (SSU) processome, composed of more than 70 proteins and the RNA chaperone small nucleolar RNA (snoRNA) U3. Interacts with ALYREF/THOC4. Interacts with DHX36; this interaction occurs in a RNase-insensitive manner. Interacts with NRDE2. Interacts (via C-terminus) with USP36 (via C-terminus); the interaction is facilitated by the association with RNA and promotes sumoylation of EXOSC10. It depends on Mg(2+) as a cofactor. Sumoylated by USP36; sumoylation does not significantly affect EXOSC10 nucleolar localization and association with core exosome and USP36, but regulates the nucleolar RNA exosome activity in rRNA processing by promoting binding of EXOSC10 to pre-rRNAs. Effects of sumoylation on EXOSC10 levels vary between different studies. Sumoylation of EXOSC10 is required for the modulation of EXOSC10 effects on cellular protein translation and cell proliferation. Sumoylation is promoted by mild hypothermia.

The protein localises to the cytoplasm. It is found in the nucleus. The protein resides in the nucleolus. It localises to the nucleoplasm. Arginine-rich dipeptide repeat proteins expressed from C9orf72-derived repeat RNA interact with EXOSC10 and inhibit its ability to promote degradation of this RNA. In terms of biological role, catalytic component of the RNA exosome complex which has 3'-&gt;5' exoribonuclease activity and participates in a multitude of cellular RNA processing and degradation events. In the nucleus, the RNA exosome complex is involved in proper maturation of stable RNA species such as rRNA, snRNA and snoRNA, in the elimination of RNA processing by-products and non-coding 'pervasive' transcripts, such as antisense RNA species and promoter-upstream transcripts (PROMPTs), and of mRNAs with processing defects, thereby limiting or excluding their export to the cytoplasm. Part of the small subunit (SSU) processome, first precursor of the small eukaryotic ribosomal subunit. During the assembly of the SSU processome in the nucleolus, many ribosome biogenesis factors, an RNA chaperone and ribosomal proteins associate with the nascent pre-rRNA and work in concert to generate RNA folding, modifications, rearrangements and cleavage as well as targeted degradation of pre-ribosomal RNA by the RNA exosome. The RNA exosome may be involved in Ig class switch recombination (CSR) and/or Ig variable region somatic hypermutation (SHM) by targeting AICDA deamination activity to transcribed dsDNA substrates. In the cytoplasm, the RNA exosome complex is involved in general mRNA turnover and specifically degrades inherently unstable mRNAs containing AU-rich elements (AREs) within their 3' untranslated regions, and in RNA surveillance pathways, preventing translation of aberrant mRNAs. It seems to be involved in degradation of histone mRNA. EXOSC10 is required for nucleolar localization of C1D and probably mediates the association of MTREX, C1D and MPHOSPH6 with the RNA exosome involved in the maturation of 5.8S rRNA. Plays a role in the recruitment of replication protein A complex (RPA) and RAD51 to DNA double-strand breaks caused by irradiation, contributing to DNA repair by homologous recombination. Regulates levels of damage-induced RNAs in order to prevent DNA-RNA hybrid formation at DNA double-strand breaks and limit DNA end resection after damage. Plays a role in oocyte development, maturation and survival. Required for normal testis development and mitotic division of spermatogonia. Plays a role in proper embryo development. Required for global protein translation. Required for cell proliferation. Regulates metabolism of C9orf72-derived repeat RNA that can be translated into toxic dipeptide repeat proteins. The sequence is that of Exosome complex component 10 from Homo sapiens (Human).